Reading from the N-terminus, the 104-residue chain is Integration host factor subunit alpha (104 aa).

Belongs to the bacterial histone-like protein family. As to quaternary structure, heterodimer of an alpha and a beta chain.

Its function is as follows. This protein is one of the two subunits of integration host factor, a specific DNA-binding protein that functions in genetic recombination as well as in transcriptional and translational control. The polypeptide is Integration host factor subunit alpha (Buchnera aphidicola subsp. Cinara cedri (strain Cc)).